The following is a 209-amino-acid chain: Small ribosomal subunit protein uS5 (209 aa).

The 64-residue stretch at 48 to 111 (LEDEVLDINM…DAAKLNITYI (64 aa)) folds into the S5 DRBM domain.

Belongs to the universal ribosomal protein uS5 family. As to quaternary structure, part of the 30S ribosomal subunit. Contacts protein S4.

With S4 and S12 plays an important role in translational accuracy. The sequence is that of Small ribosomal subunit protein uS5 from Methanosarcina mazei (strain ATCC BAA-159 / DSM 3647 / Goe1 / Go1 / JCM 11833 / OCM 88) (Methanosarcina frisia).